We begin with the raw amino-acid sequence, 391 residues long: Pectate lyase B (391 aa).

The N-terminal stretch at Met1–Ala30 is a signal peptide. Residues Asp181, Asp203, and Asp207 each coordinate Ca(2+). Arg305 is a catalytic residue.

Belongs to the polysaccharide lyase 1 family. Requires Ca(2+) as cofactor.

Its subcellular location is the secreted. The catalysed reaction is Eliminative cleavage of (1-&gt;4)-alpha-D-galacturonan to give oligosaccharides with 4-deoxy-alpha-D-galact-4-enuronosyl groups at their non-reducing ends.. It catalyses the reaction Eliminative cleavage of (1-&gt;4)-alpha-D-galacturonan methyl ester to give oligosaccharides with 4-deoxy-6-O-methyl-alpha-D-galact-4-enuronosyl groups at their non-reducing ends.. It participates in glycan metabolism; pectin degradation. In terms of biological role, catalyzes the depolymerization of both polygalacturonate and pectins of various methyl esterification degree, with an endo mode of action. Shows the highest activity on 20 to 34% methylated pectin but retains 67%, 51%, 25%, and 1% of its maximum activity on polygalacturonate and 8.5%, 55 to 70%, and 90% methylated pectin, respectively. The sequence is that of Pectate lyase B from Paenibacillus amylolyticus.